A 323-amino-acid chain; its full sequence is Methionyl-tRNA formyltransferase (323 aa).

Serine 115–proline 118 is a (6S)-5,6,7,8-tetrahydrofolate binding site.

Belongs to the Fmt family.

The enzyme catalyses L-methionyl-tRNA(fMet) + (6R)-10-formyltetrahydrofolate = N-formyl-L-methionyl-tRNA(fMet) + (6S)-5,6,7,8-tetrahydrofolate + H(+). Attaches a formyl group to the free amino group of methionyl-tRNA(fMet). The formyl group appears to play a dual role in the initiator identity of N-formylmethionyl-tRNA by promoting its recognition by IF2 and preventing the misappropriation of this tRNA by the elongation apparatus. The chain is Methionyl-tRNA formyltransferase from Lactococcus lactis subsp. cremoris (strain SK11).